Here is a 108-residue protein sequence, read N- to C-terminus: Nucleoid-associated protein ACP_0492 (108 aa).

This sequence belongs to the YbaB/EbfC family. In terms of assembly, homodimer.

It is found in the cytoplasm. Its subcellular location is the nucleoid. Its function is as follows. Binds to DNA and alters its conformation. May be involved in regulation of gene expression, nucleoid organization and DNA protection. The sequence is that of Nucleoid-associated protein ACP_0492 from Acidobacterium capsulatum (strain ATCC 51196 / DSM 11244 / BCRC 80197 / JCM 7670 / NBRC 15755 / NCIMB 13165 / 161).